The primary structure comprises 721 residues: Zinc-transporting ATPase (721 aa).

Residues 1–107 (MTQSSPLKTQ…HSHGAGEFNL (107 aa)) are Cytoplasmic-facing. An HMA domain is found at 8–74 (KTQQMQVGGM…RIAALGYTLA (67 aa)). Zn(2+) contacts are provided by C19 and C22. Residues 80-101 (VTLNGHKHPHSHREEGHSHSHG) are disordered. The helical transmembrane segment at 108-128 (KQELLPVLTAIALFTIAILFE) threads the bilayer. The Extracellular segment spans residues 129–140 (QPLHNTPGQIAE). A helical membrane pass occupies residues 141 to 160 (FAVIIPAYLLSGWTVLKTAG). The Cytoplasmic portion of the chain corresponds to 161-167 (RNILRGQ). The chain crosses the membrane as a helical span at residues 168-187 (IFDENFLMTIATLGALAIHQ). Topologically, residues 188 to 190 (LPE) are extracellular. Residues 191–210 (AVAVMLFFRVGELFQEYSVG) form a helical membrane-spanning segment. Residues 211–344 (RSRRSIKALL…ITQFARYYTP (134 aa)) lie on the Cytoplasmic side of the membrane. The helical transmembrane segment at 345 to 363 (VIVFLSLAVALLPPLFIPG) threads the bilayer. Topologically, residues 364–369 (ADRADW) are extracellular. Residues 370 to 387 (VYRALVLLVISCPCGLVI) traverse the membrane as a helical segment. Residues 388–671 (SIPLGYFGGI…AIHVARKTRQ (284 aa)) lie on the Cytoplasmic side of the membrane. D425 acts as the 4-aspartylphosphate intermediate in catalysis. The Mg(2+) site is built by D618 and D622. Residues 672–693 (IVVQNIVLALGIKALFIALGTI) form a helical membrane-spanning segment. The Extracellular segment spans residues 694–701 (GLATLWEA). A helical transmembrane segment spans residues 702 to 717 (VFADVGVALLAILNAT). Topologically, residues 718-721 (RIAK) are cytoplasmic.

Belongs to the cation transport ATPase (P-type) (TC 3.A.3) family. Type IB subfamily.

The protein localises to the cell membrane. The catalysed reaction is Zn(2+)(in) + ATP + H2O = Zn(2+)(out) + ADP + phosphate + H(+). This chain is Zinc-transporting ATPase (ziaA), found in Synechocystis sp. (strain ATCC 27184 / PCC 6803 / Kazusa).